Here is a 125-residue protein sequence, read N- to C-terminus: Large ribosomal subunit protein bL12 (125 aa).

This sequence belongs to the bacterial ribosomal protein bL12 family. In terms of assembly, homodimer. Part of the ribosomal stalk of the 50S ribosomal subunit. Forms a multimeric L10(L12)X complex, where L10 forms an elongated spine to which 2 to 4 L12 dimers bind in a sequential fashion. Binds GTP-bound translation factors.

Its function is as follows. Forms part of the ribosomal stalk which helps the ribosome interact with GTP-bound translation factors. Is thus essential for accurate translation. The polypeptide is Large ribosomal subunit protein bL12 (Campylobacter jejuni subsp. jejuni serotype O:2 (strain ATCC 700819 / NCTC 11168)).